A 319-amino-acid chain; its full sequence is MVTIVDTLSNTPLRPRHPEKANRPDSISPAKPSWIRVKAPTTRGYADTRNIVRENGLVTVCEEAGCPNIGECWDKKHATFMIMGDTCTRACAFCNVKTGLPAALDAGEPEHVAEATFKLGLAHVVVTSVDRDDLADGGAAHIAATIRAIRATCPTTTIEVLTPDFLRKDGALEQVVAAKPDVFNHNLETVPSRYLSVRPGARYFHSIRLLQRVKEIDPTIFTKSGIMVGLGEQRHEVLQVMDDLRSAEVDFLTIGQYLQPTKKHHAVMAYVTPEEFSNYETVAYTKGFLMVSASPLTRSSHHAGEDFAKLKAARDALAR.

Polar residues predominate over residues 1-12 (MVTIVDTLSNTP). Residues 1–32 (MVTIVDTLSNTPLRPRHPEKANRPDSISPAKP) form a disordered region. Residues cysteine 61, cysteine 66, cysteine 72, cysteine 87, cysteine 91, cysteine 94, and serine 300 each contribute to the [4Fe-4S] cluster site. A Radical SAM core domain is found at 73–289 (WDKKHATFMI…ETVAYTKGFL (217 aa)).

Belongs to the radical SAM superfamily. Lipoyl synthase family. [4Fe-4S] cluster serves as cofactor.

It localises to the cytoplasm. It carries out the reaction [[Fe-S] cluster scaffold protein carrying a second [4Fe-4S](2+) cluster] + N(6)-octanoyl-L-lysyl-[protein] + 2 oxidized [2Fe-2S]-[ferredoxin] + 2 S-adenosyl-L-methionine + 4 H(+) = [[Fe-S] cluster scaffold protein] + N(6)-[(R)-dihydrolipoyl]-L-lysyl-[protein] + 4 Fe(3+) + 2 hydrogen sulfide + 2 5'-deoxyadenosine + 2 L-methionine + 2 reduced [2Fe-2S]-[ferredoxin]. Its pathway is protein modification; protein lipoylation via endogenous pathway; protein N(6)-(lipoyl)lysine from octanoyl-[acyl-carrier-protein]: step 2/2. In terms of biological role, catalyzes the radical-mediated insertion of two sulfur atoms into the C-6 and C-8 positions of the octanoyl moiety bound to the lipoyl domains of lipoate-dependent enzymes, thereby converting the octanoylated domains into lipoylated derivatives. This Bradyrhizobium sp. (strain BTAi1 / ATCC BAA-1182) protein is Lipoyl synthase.